A 241-amino-acid chain; its full sequence is MIALGVNIDHVATLRQARGTRYPDPVEAAFVAERAGADAITAHLREDRRHIVERDVEILSQTLRTRLNLEMAVEEGVLRVAERLSPSDCCLVPERRAELTTEGGLDVAGQLSRIKEACQRLAAAKVRVSLFVDPDPFQLEAAMETGAPVVELHTGRYANTADTATRAEELGQITSAASFADSLGLQVNAGHGLDYHNVQAVAAIPYIRELNIGHAIVAHAVFVGMATAVADMKRLMLEARG.

Asparagine 7 contacts 3-amino-2-oxopropyl phosphate. 9–10 (DH) is a binding site for 1-deoxy-D-xylulose 5-phosphate. Arginine 18 contributes to the 3-amino-2-oxopropyl phosphate binding site. Histidine 43 functions as the Proton acceptor in the catalytic mechanism. Arginine 45 and histidine 50 together coordinate 1-deoxy-D-xylulose 5-phosphate. Glutamate 70 acts as the Proton acceptor in catalysis. Threonine 100 is a binding site for 1-deoxy-D-xylulose 5-phosphate. Residue histidine 191 is the Proton donor of the active site. Residues glycine 192 and 213–214 (GH) contribute to the 3-amino-2-oxopropyl phosphate site.

Belongs to the PNP synthase family. Homooctamer; tetramer of dimers.

Its subcellular location is the cytoplasm. It carries out the reaction 3-amino-2-oxopropyl phosphate + 1-deoxy-D-xylulose 5-phosphate = pyridoxine 5'-phosphate + phosphate + 2 H2O + H(+). It functions in the pathway cofactor biosynthesis; pyridoxine 5'-phosphate biosynthesis; pyridoxine 5'-phosphate from D-erythrose 4-phosphate: step 5/5. Its function is as follows. Catalyzes the complicated ring closure reaction between the two acyclic compounds 1-deoxy-D-xylulose-5-phosphate (DXP) and 3-amino-2-oxopropyl phosphate (1-amino-acetone-3-phosphate or AAP) to form pyridoxine 5'-phosphate (PNP) and inorganic phosphate. This chain is Pyridoxine 5'-phosphate synthase, found in Acidithiobacillus ferrooxidans (strain ATCC 23270 / DSM 14882 / CIP 104768 / NCIMB 8455) (Ferrobacillus ferrooxidans (strain ATCC 23270)).